A 387-amino-acid polypeptide reads, in one-letter code: 1,3-propanediol dehydrogenase (387 aa).

This sequence belongs to the iron-containing alcohol dehydrogenase family. In terms of assembly, homooctamer. Fe cation serves as cofactor.

The catalysed reaction is propane-1,3-diol + NAD(+) = 3-hydroxypropanal + NADH + H(+). Its activity is regulated as follows. Inhibited by the metal chelator 1,10-phenanthroline. In terms of biological role, catalyzes the reduction of 3-hydroxypropanal. Is considerably less active with glyceraldehyde, propionaldehyde, acetaldehyde, and butyraldehyde. Also catalyzes the oxidation of various primary, secondary, and tertiary alcohols. Is most active with substrates containing two primary alcohol groups separated by one or two carbon atoms. 1,3-propanediol is the preferred substrate. This Citrobacter freundii protein is 1,3-propanediol dehydrogenase.